Consider the following 146-residue polypeptide: Large ribosomal subunit protein uL15 (146 aa).

The tract at residues 1–58 is disordered; that stretch reads MRLHELHPAPGSRPRATRVGRGIGSGLGKTSGRGHKGQKARSGGGVRRGFEGGQMPLT. Residues 21 to 31 are compositionally biased toward gly residues; the sequence is RGIGSGLGKTS.

Belongs to the universal ribosomal protein uL15 family. Part of the 50S ribosomal subunit.

Binds to the 23S rRNA. The chain is Large ribosomal subunit protein uL15 from Moorella thermoacetica (strain ATCC 39073 / JCM 9320).